The following is a 1358-amino-acid chain: Insulin-like growth factor 1 receptor (1358 aa).

Positions 1 to 25 (MKAELVPVCTAWILGLLLCLGPAAA) are cleaved as a signal peptide. A disulfide bridge links C28 with C47. N-linked (GlcNAc...) asparagine glycans are attached at residues N74, N99, and N132. 13 disulfides stabilise this stretch: C147–C175, C179–C202, C189–C208, C212–C221, C216–C227, C228–C236, C232–C245, C248–C257, C261–C273, C279–C299, C303–C317, C320–C324, and C328–C347. N241 carries N-linked (GlcNAc...) asparagine glycosylation. N310 carries an N-linked (GlcNAc...) asparagine glycan. N-linked (GlcNAc...) asparagine glycosylation is found at N411 and N432. Cysteines 449 and 482 form a disulfide. Fibronectin type-III domains follow at residues 483–603 (ESHV…TDAA), 604–702 (VPSI…TEAE), 727–818 (PRPN…FVFA), and 829–924 (IPGI…LKPD). N-linked (GlcNAc...) asparagine glycosylation is found at N488, N528, N616, N634, and N669. The tract at residues 670–691 (GTIDTEGGTEPTKPEGSVGEKG) is disordered. The Extracellular segment spans residues 735–934 (DVLAVGNSTV…VRNNILQMVV (200 aa)). Residues N741, N750, N758, N895, and N908 are each glycosylated (N-linked (GlcNAc...) asparagine). A helical membrane pass occupies residues 935 to 955 (AIPLALSFLLVGIISIVCFVF). The Cytoplasmic portion of the chain corresponds to 956 to 1358 (KKRNSNRLGN…ALPLPQSSAC (403 aa)). Y976 is subject to Phosphotyrosine; by autocatalysis. The Protein kinase domain maps to 995-1270 (ITMNRELGQG…SIKDELDPGF (276 aa)). ATP-binding positions include 1001-1009 (LGQGSFGMV) and K1029. Residue D1131 is the Proton acceptor of the active site. 3 positions are modified to phosphotyrosine; by autocatalysis: Y1157, Y1161, and Y1162. The tract at residues 1336 to 1358 (PYAHMNGGRKNERALPLPQSSAC) is disordered.

Belongs to the protein kinase superfamily. Tyr protein kinase family. Insulin receptor subfamily. As to quaternary structure, tetramer of 2 alpha and 2 beta chains linked by disulfide bonds. The alpha chains contribute to the formation of the ligand-binding domain, while the beta chain carries the kinase domain. Mn(2+) serves as cofactor. The cytoplasmic domain of the beta subunit is autophosphorylated on Tyr residues in response to low concentrations of insulin-like growth factor (IGF1) and higher concentrations of insulin.

The protein resides in the cell membrane. The enzyme catalyses L-tyrosyl-[protein] + ATP = O-phospho-L-tyrosyl-[protein] + ADP + H(+). Its activity is regulated as follows. Autophosphorylation activates the kinase activity. Its function is as follows. This receptor binds insulin-like growth factor 1 (IGF1) with a high affinity and IGF2 with a lower affinity. It has a tyrosine-protein kinase activity, which is necessary for the activation of the IGF1-stimulated downstream signaling cascade. Plays a role in oocyte maturation. Promotes head development by inhibiting Wnt signaling during embryogenesis. In Xenopus laevis (African clawed frog), this protein is Insulin-like growth factor 1 receptor (igf1r).